Reading from the N-terminus, the 1089-residue chain is MPAGSNEPDGVLSYQRPDEEAVVDQGGTSTILNIHYEKEELEGHRTLYVGVRMPLGRQSHRHHRTHGQKHRRRGGRGKGASQGEEGLEALAHDTPSQRVQFILGTEEDEEHVPHELFTELDEICMKEGEDAEWKETARWLKFEEDVEDGGERWSKPYVATLSLHSLFELRSCLINGSVLLDMRASSIEEISDLILDQQELLRDLSDSVRVKVREALLKKHHHQNERRRNNLIPIVRSFAEVGKKQSDPHSMDRDGQTVSPQSATNLEVKNGVNCEHSPVDLSKVDLHFMKKIPTGAEASNVLVGEVDTLDRPIVAFVRLSPAVLLSGLTEVPIPTRFLFILLGPVGKGQQYHEIGRSMATIMTDEIFHDVAYKAKERDDLLAGIDEFLDQVTVLPPGEWDPSIRIEPPKNVPSQEKRKMPGVPNGNVCHIEPEPHGGHSGPELERTGRLFGGLVLDVKRKAPWYWSDYRDALSLQCLASFLFLYCACMSPVITFGGLLGEATEGRISAIESLFGASMTGIAYSLFAGQPLTILGSTGPVLVFEKILFKFCKDYALSYLSLRALIGLWTAFLCIVLVATDASSLVCYITRFTEEAFASLICIIFIYEAIEKLIHLAETYPIHMHSQLDHLSLYYCRCVLPENPNNHTLQYWKDHNILAAEVNWANLTVSECQEMHGEFMGSACGHHGPYTPDVLFWSCILFFATFIVSSTLKTFKTSRYFPTRVRSMVSDFAVFLTIFTMVVLDFLIGVPSPKLQVPNVFKPTRDDRGWFINPIGPNPWWTVIAAIIPALLCTILIFMDQQITAVIINRKEHKLKKGCGYHLDLLMVAVMLGVCSIMGLPWFVAATVLSITHVNSLKLESECSAPGEQPKFLGIREQRVTGLMIFVLMGCSVFMTAVLKFIPMPVLYGVFLYMGVSSLQGIQFFDRLKLFGMPAKHQPDFIYLRHVPLRKVHLFTLVQLTCLVLLWVIKASPAAIVFPMMVLALVFVRKVMDLCFSKRELSWLDDLMPESKKKKLDDAKKKEEEEAEKMLDIGGDKFPLESRKLLSSPGKSSSFRCDPSEINISDEMPKTTVWKALSINSGNTKEKSPFN.

The Extracellular segment spans residues 1 to 476 (MPAGSNEPDG…DYRDALSLQC (476 aa)). The tract at residues 55–90 (LGRQSHRHHRTHGQKHRRRGGRGKGASQGEEGLEAL) is disordered. Basic residues predominate over residues 58-76 (QSHRHHRTHGQKHRRRGGR). Residues 477–497 (LASFLFLYCACMSPVITFGGL) form a helical membrane-spanning segment. The Cytoplasmic segment spans residues 498–505 (LGEATEGR). Residues 506-526 (ISAIESLFGASMTGIAYSLFA) traverse the membrane as a helical segment. Topologically, residues 527-563 (GQPLTILGSTGPVLVFEKILFKFCKDYALSYLSLRAL) are extracellular. A helical membrane pass occupies residues 564 to 584 (IGLWTAFLCIVLVATDASSLV). Topologically, residues 585–593 (CYITRFTEE) are cytoplasmic. Residues 594–614 (AFASLICIIFIYEAIEKLIHL) traverse the membrane as a helical segment. Residues 615–685 (AETYPIHMHS…EFMGSACGHH (71 aa)) are Extracellular-facing. 2 disulfides stabilise this stretch: C634–C682 and C636–C670. Residue N644 is glycosylated (N-linked (GlcNAc) asparagine). The chain crosses the membrane as a helical span at residues 686–706 (GPYTPDVLFWSCILFFATFIV). The Cytoplasmic portion of the chain corresponds to 707–729 (SSTLKTFKTSRYFPTRVRSMVSD). A helical membrane pass occupies residues 730-750 (FAVFLTIFTMVVLDFLIGVPS). The Extracellular portion of the chain corresponds to 751–776 (PKLQVPNVFKPTRDDRGWFINPIGPN). A helical transmembrane segment spans residues 777–797 (PWWTVIAAIIPALLCTILIFM). The Cytoplasmic portion of the chain corresponds to 798–822 (DQQITAVIINRKEHKLKKGCGYHLD). A helical transmembrane segment spans residues 823 to 843 (LLMVAVMLGVCSIMGLPWFVA). At 844–879 (ATVLSITHVNSLKLESECSAPGEQPKFLGIREQRVT) the chain is on the extracellular side. Residues 880 to 900 (GLMIFVLMGCSVFMTAVLKFI) traverse the membrane as a helical segment. Topologically, residues 901 to 902 (PM) are cytoplasmic. Residues 903-923 (PVLYGVFLYMGVSSLQGIQFF) traverse the membrane as a helical segment. The Extracellular segment spans residues 924–960 (DRLKLFGMPAKHQPDFIYLRHVPLRKVHLFTLVQLTC). A helical membrane pass occupies residues 961 to 981 (LVLLWVIKASPAAIVFPMMVL). Topologically, residues 982–1089 (ALVFVRKVMD…GNTKEKSPFN (108 aa)) are cytoplasmic.

The protein belongs to the anion exchanger (TC 2.A.31) family. Homodimer. Expressed in the hippocampal neurons (at protein level). Highly expressed in brain with lower levels in lung, kidney and heart. In the kidney, there is high expression in the inner medulla, localized to the inner medullary collecting duct. In the brain, there seems to be three transcripts each having a different expression pattern. The smaller 3kb transcript has highest expression levels in the thalamus and the largest 9.5kb transcript has highest levels in the substantia nigra. The middle transcript of 4.4kb, which is also the main transcript in kidney, is highly expressed in thalamus. Hence, the highest levels are observed in the thalamus, amygdala and caudate nucleus and very low expression was seen in the corpus callosum.

Its subcellular location is the cell membrane. The protein localises to the apical cell membrane. It localises to the basolateral cell membrane. It is found in the cytoplasmic vesicle. The protein resides in the secretory vesicle. Its subcellular location is the synaptic vesicle membrane. It carries out the reaction 2 hydrogencarbonate(out) + chloride(in) + Na(+)(out) = 2 hydrogencarbonate(in) + chloride(out) + Na(+)(in). Mediates electroneutral sodium- and carbonate-dependent chloride-HCO3(-) exchange with a Na(+):HCO3(-) stoichiometry of 2:1. Plays a major role in pH regulation in neurons. Mediates sodium reabsorption in the renal cortical collecting ducts. The protein is Electroneutral sodium bicarbonate exchanger 1 of Mus musculus (Mouse).